We begin with the raw amino-acid sequence, 244 residues long: Triosephosphate isomerase (244 aa).

Residue 9-11 (NWK) coordinates substrate. The active-site Electrophile is the His93. Glu161 acts as the Proton acceptor in catalysis. Residues Gly167, Ser206, and 227–228 (GG) each bind substrate.

The protein belongs to the triosephosphate isomerase family. As to quaternary structure, homodimer.

It is found in the cytoplasm. The catalysed reaction is D-glyceraldehyde 3-phosphate = dihydroxyacetone phosphate. It functions in the pathway carbohydrate biosynthesis; gluconeogenesis. Its pathway is carbohydrate degradation; glycolysis; D-glyceraldehyde 3-phosphate from glycerone phosphate: step 1/1. Its function is as follows. Involved in the gluconeogenesis. Catalyzes stereospecifically the conversion of dihydroxyacetone phosphate (DHAP) to D-glyceraldehyde-3-phosphate (G3P). The polypeptide is Triosephosphate isomerase (Deinococcus geothermalis (strain DSM 11300 / CIP 105573 / AG-3a)).